Here is a 90-residue protein sequence, read N- to C-terminus: Albumin-1 (90 aa).

Residue A1 is a signal peptide. Intrachain disulfides connect C4–C21, C8–C23, and C16–C34. Residues 40-47 (LSSVAKMI) constitute a propeptide that is removed on maturation.

The C-terminal glycine may be removed from A1b.

Its function is as follows. A1b binds to basic 7S globulin (BG) and stimulates its phosphorylation activity. This is Albumin-1 (LEG) from Phaseolus angularis (Azuki bean).